The primary structure comprises 291 residues: Lactoylglutathione lyase (291 aa).

VOC domains follow at residues 24–149 (RLLH…LIQR) and 155–283 (PLCQ…LVDN). Residues Arg-31, Asn-82, and His-96 each coordinate substrate. His-96 is a catalytic residue. Catalysis depends on Glu-145, which acts as the Proton donor/acceptor. Position 145 (Glu-145) interacts with Ni(2+). Catalysis depends on residues Gln-158 and Glu-209. Ni(2+) is bound at residue Glu-209.

The protein belongs to the glyoxalase I family. Monomer. Ni(2+) is required as a cofactor. Phosphorylated after gibberellin treatment. As to expression, expressed in callus, stem, leaves, panicles and maturing seeds (at protein level).

It carries out the reaction (R)-S-lactoylglutathione = methylglyoxal + glutathione. It participates in secondary metabolite metabolism; methylglyoxal degradation; (R)-lactate from methylglyoxal: step 1/2. Catalyzes the conversion of hemimercaptal, formed from methylglyoxal and glutathione, to S-lactoylglutathione. Involved in the detoxifiation of methylglyoxal. Can functionally complement growth defect of a yeast mutant lacking GLY I. Involved in abiotic stress response. Over-expression of GLYI-11 in tobacco increases tolerance to osmotic, oxidative and salt stresses. This Oryza sativa subsp. japonica (Rice) protein is Lactoylglutathione lyase.